The sequence spans 421 residues: UDP-N-acetylglucosamine 1-carboxyvinyltransferase (421 aa).

Residue 23–24 (KN) participates in phosphoenolpyruvate binding. A UDP-N-acetyl-alpha-D-glucosamine-binding site is contributed by Arg-92. The active-site Proton donor is the Cys-116. Residue Cys-116 is modified to 2-(S-cysteinyl)pyruvic acid O-phosphothioketal. UDP-N-acetyl-alpha-D-glucosamine contacts are provided by residues 121-125 (RPVDL), 161-164 (KVSV), Asp-306, and Ile-328.

It belongs to the EPSP synthase family. MurA subfamily.

It localises to the cytoplasm. It carries out the reaction phosphoenolpyruvate + UDP-N-acetyl-alpha-D-glucosamine = UDP-N-acetyl-3-O-(1-carboxyvinyl)-alpha-D-glucosamine + phosphate. Its pathway is cell wall biogenesis; peptidoglycan biosynthesis. Functionally, cell wall formation. Adds enolpyruvyl to UDP-N-acetylglucosamine. The chain is UDP-N-acetylglucosamine 1-carboxyvinyltransferase from Vibrio vulnificus (strain CMCP6).